We begin with the raw amino-acid sequence, 273 residues long: Glutamate racemase (273 aa).

Substrate-binding positions include 11-12 and 43-44; these read DS and YG. C74 (proton donor/acceptor) is an active-site residue. 75–76 lines the substrate pocket; it reads NT. The active-site Proton donor/acceptor is C185. 186-187 is a binding site for substrate; that stretch reads TH.

This sequence belongs to the aspartate/glutamate racemases family.

The catalysed reaction is L-glutamate = D-glutamate. It functions in the pathway cell wall biogenesis; peptidoglycan biosynthesis. Its function is as follows. Provides the (R)-glutamate required for cell wall biosynthesis. This is Glutamate racemase from Lactiplantibacillus plantarum (strain ATCC BAA-793 / NCIMB 8826 / WCFS1) (Lactobacillus plantarum).